A 415-amino-acid chain; its full sequence is Fructose-1,6-bisphosphatase, chloroplastic (415 aa).

The transit peptide at M1–M57 directs the protein to the chloroplast. Mg(2+) contacts are provided by E135, E164, D185, L187, and D188. D188–S191 provides a ligand contact to substrate. Residues S207–V232 form an involved in light regulation region. An intrachain disulfide couples C231 to C236. Substrate is bound by residues N295, Y327, Y345, Y347, and K357. A Mg(2+)-binding site is contributed by E363.

The protein belongs to the FBPase class 1 family. Homotetramer. It depends on Mg(2+) as a cofactor.

The protein resides in the plastid. It localises to the chloroplast. It carries out the reaction beta-D-fructose 1,6-bisphosphate + H2O = beta-D-fructose 6-phosphate + phosphate. The protein operates within carbohydrate biosynthesis; Calvin cycle. This chain is Fructose-1,6-bisphosphatase, chloroplastic, found in Spinacia oleracea (Spinach).